The sequence spans 824 residues: uncharacterized protein (824 aa).

This is an uncharacterized protein from Caenorhabditis elegans.